The primary structure comprises 138 residues: Large ribosomal subunit protein uL16 (138 aa).

A compositionally biased stretch (basic residues) spans 1–16; sequence MLIPKRVKYRRQHRPT. Residues 1 to 23 are disordered; the sequence is MLIPKRVKYRRQHRPTRSGVSKG.

This sequence belongs to the universal ribosomal protein uL16 family. As to quaternary structure, part of the 50S ribosomal subunit.

Functionally, binds 23S rRNA and is also seen to make contacts with the A and possibly P site tRNAs. The protein is Large ribosomal subunit protein uL16 of Corynebacterium aurimucosum (strain ATCC 700975 / DSM 44827 / CIP 107346 / CN-1) (Corynebacterium nigricans).